The primary structure comprises 370 residues: Vasopressin V2 receptor (370 aa).

Polar residues predominate over residues 1–10 (MLLASTTSAV). The segment at 1–26 (MLLASTTSAVPRTLSPPTPAGNGSRE) is disordered. Over 1–37 (MLLASTTSAVPRTLSPPTPAGNGSRELLDTRDPLLVQ) the chain is Extracellular. The N-linked (GlcNAc...) asparagine glycan is linked to Asn-22. A helical membrane pass occupies residues 38 to 62 (AELALLSTVFVAVALSNGLVLGALA). Topologically, residues 63-76 (RRVRRGRWAPMHVF) are cytoplasmic. Residues 77 to 97 (IGHLCLADLAVALFQVLPQLA) traverse the membrane as a helical segment. Residues 98-112 (WDATDRFRGPDALCR) are Extracellular-facing. A helical membrane pass occupies residues 113 to 134 (AVKYLQMVGMYASSYMILAMTL). The Cytoplasmic portion of the chain corresponds to 135 to 158 (DRHRAICRPMLAYRHGGGARWNRP). Residues 159–179 (VLVAWAFSLILSLPQLFIFAQ) form a helical membrane-spanning segment. Residues 180–199 (RDVGNGSGVLDCWAHFAEPW) are Extracellular-facing. A helical membrane pass occupies residues 200–219 (GLRAYVTWIALMVFVAPALG). The Cytoplasmic segment spans residues 220–270 (IAACQVLIFREIHSSLVPGPAERAGGCRGGHRTGSPSEGARVSAAMAKTVR). Residues 271–292 (MTLVIVIVYVLCWAPFFLVQLW) form a helical membrane-spanning segment. Residues 293–307 (AAWDPQAPLEGAPFV) are Extracellular-facing. A helical transmembrane segment spans residues 308–327 (LLMLLASLNSCTNPWIYAFF). The Cytoplasmic segment spans residues 328–370 (SSSVSSELRSLFCWARSRAPPSLGPQEESCATASSFLAKDTSS). Cys-340 carries the S-palmitoyl cysteine lipid modification.

It belongs to the G-protein coupled receptor 1 family. Vasopressin/oxytocin receptor subfamily. In terms of assembly, interacts with ARRDC4. Identified in a complex containing at least ARRDC4, V2R and HGS. Interacts with TMEM147.

The protein resides in the cell membrane. Its function is as follows. Receptor for arginine vasopressin. The activity of this receptor is mediated by G proteins which activate adenylate cyclase. Involved in renal water reabsorption. The sequence is that of Vasopressin V2 receptor (AVPR2) from Canis lupus familiaris (Dog).